We begin with the raw amino-acid sequence, 218 residues long: Eukaryotic translation initiation factor 3 subunit K (218 aa).

Residues 42-204 (YDLEANLAVL…NIKPKNIVEK (163 aa)) enclose the PCI domain.

It belongs to the eIF-3 subunit K family. As to quaternary structure, component of the eukaryotic translation initiation factor 3 (eIF-3) complex, which is composed of 13 subunits: eif3a, eif3b, eif3c, eif3d, eif3e, eif3f, eif3g, eif3h, eif3i, eif3j, eif3k, eif3l and eif3m.

The protein localises to the nucleus. It localises to the cytoplasm. Component of the eukaryotic translation initiation factor 3 (eIF-3) complex, which is involved in protein synthesis of a specialized repertoire of mRNAs and, together with other initiation factors, stimulates binding of mRNA and methionyl-tRNAi to the 40S ribosome. The eIF-3 complex specifically targets and initiates translation of a subset of mRNAs involved in cell proliferation. The protein is Eukaryotic translation initiation factor 3 subunit K (eif3k) of Xenopus tropicalis (Western clawed frog).